The sequence spans 276 residues: uncharacterized protein (276 aa).

Positions 20 to 137 (PVLIFIPGAN…PPINTFLPDS (118 aa)) constitute an AB hydrolase-1 domain. The segment at 57 to 76 (GESELTEPLPDSASNPDSDY) is disordered.

Belongs to the AB hydrolase superfamily.

This is an uncharacterized protein from Staphylococcus aureus (strain USA300).